A 307-amino-acid polypeptide reads, in one-letter code: Transmembrane and coiled-coil domain-containing protein 5B (307 aa).

Positions 17 to 207 form a coiled coil; the sequence is FASSLEAVKQ…LEKQISKAQD (191 aa). A helical membrane pass occupies residues 243–265; sequence YFQYLTFMVLVFIRLLAYVIFHL.

This sequence belongs to the TMCO5 family.

The protein localises to the membrane. The chain is Transmembrane and coiled-coil domain-containing protein 5B (TMCO5B) from Homo sapiens (Human).